Consider the following 299-residue polypeptide: Pyridoxal kinase PdxY (299 aa).

S18 is a binding site for substrate. 2 residues coordinate ATP: D120 and E157. Residue D235 participates in substrate binding.

The protein belongs to the pyridoxine kinase family. PdxY subfamily. As to quaternary structure, homodimer. Mg(2+) is required as a cofactor.

It catalyses the reaction pyridoxal + ATP = pyridoxal 5'-phosphate + ADP + H(+). It functions in the pathway cofactor metabolism; pyridoxal 5'-phosphate salvage; pyridoxal 5'-phosphate from pyridoxal: step 1/1. Pyridoxal kinase involved in the salvage pathway of pyridoxal 5'-phosphate (PLP). Catalyzes the phosphorylation of pyridoxal to PLP. This chain is Pyridoxal kinase PdxY, found in Deinococcus geothermalis (strain DSM 11300 / CIP 105573 / AG-3a).